Reading from the N-terminus, the 461-residue chain is Ufm1-specific protease 2 (461 aa).

Catalysis depends on residues cysteine 294, aspartate 418, and histidine 420.

The protein belongs to the peptidase C78 family.

The protein localises to the endoplasmic reticulum. The protein resides in the cytoplasm. It localises to the nucleus. In terms of biological role, thiol-dependent isopeptidase that specifically cleaves UFM1, a ubiquitin-like modifier protein, from conjugated proteins, such as CD274/PD-L1, CYB5R3, DDRGK1, MRE11, RPL26/uL24, TRIP4 and RPL26/uL24. While it is also able to mediate the processing of UFM1 precursors, a prerequisite for conjugation reactions, UFSP2 mainly acts as a protein deUFMylase that mediates deconjugation of UFM1 from target proteins. Mediates deUFMylation of RPL26/uL24, a critical step to release the UFM1 ribosome E3 ligase (UREL) complex during the recycling of 60S ribosome subunits from the endoplasmic reticulum. Catalyzes deUFMylation of TRIP4, regulating intracellular nuclear receptors transactivation and thereby regulate cell proliferation and differentiation. This Rattus norvegicus (Rat) protein is Ufm1-specific protease 2.